The following is a 687-amino-acid chain: Polyphosphate kinase (687 aa).

ATP is bound at residue asparagine 45. Mg(2+) is bound by residues arginine 375 and arginine 405. The Phosphohistidine intermediate role is filled by histidine 435. The ATP site is built by tyrosine 472, arginine 568, and histidine 596.

It belongs to the polyphosphate kinase 1 (PPK1) family. It depends on Mg(2+) as a cofactor. Post-translationally, an intermediate of this reaction is the autophosphorylated ppk in which a phosphate is covalently linked to a histidine residue through a N-P bond.

It catalyses the reaction [phosphate](n) + ATP = [phosphate](n+1) + ADP. Functionally, catalyzes the reversible transfer of the terminal phosphate of ATP to form a long-chain polyphosphate (polyP). The sequence is that of Polyphosphate kinase from Burkholderia multivorans (strain ATCC 17616 / 249).